Reading from the N-terminus, the 1364-residue chain is MFSSTLHEDGPATRTRSSRRRQRPVASDSSLQTQPKAKRQRVPLTESNTAPTPTPADADAPPEMFEVKPDPVLAKRERDGIGIENIENLGPRRELSLRSKKPKSGERTSKGDGSIILTTNNAFTVSKLPALPDRLRAEPTSRQHGAIFSSGYALALTHTHAFVWPYTATTASPETFTFALPYPSKHASDPLPLGALVPPSASSDDPGLVVVMPVSGRVVYWESISSAATLDFIRQQRTGIEDAISGMYSSEHITQLVSAESAGFVLVFSSGRIAYMSVRDPHGRPGITVQYLRSPFGGASLGFLSTLRHALSGSSRGDIAAAHANHGPRVGERVVIAASSKGRLQAWKIHRGGHHEPVAEADVRERLVEAVNEADAKTQAFPSESFEVLDFAFVPRGLEPKYVNASRLSEALTHEEDSLQHMLLLVGFSRGHQARYSLVETVLAPEGARIGTVRPITSYTSPVRPGALEKPRLYLPRPALVAFVVFDRAVVVASMVAPPDSPDSQLQEDSHILPPTFEDVVDFRDDDTLQVVGSGSEEPGAGTSSEDVRPHRHKTKNPTAVLLLPGVGIVRVAITDIERFASDAPPRVTAKSKLEQAVFFGIKSDNPLVFQGRRALPFSDREVCDAAVELSHEIVNSKTPFIPSVPASLEGNMKSRSAYLDALITFLNACKVNMDERTRWMLLYDAEKMAVATWIWQKHEQFLAERPRADKKTLISEAAVFINENQKTELNVAAGQVDPVRHWFIHDIFRLDIFVAWAYQIIKYHYTQKLSDEPGLNRLVWEAVTINNGALLEARQFRLDKAAQYGVDPAVVPTGNGLPEPWTSTYFITNNLKRLTEFCHQWLAKHDAQPSADPRFDARLLDTVRERLPSLTSQYFTSLSEYITWAASSTDPETQDRCRAYQAAYAEDVYKKIVKLKEFDLWEEAVELAREFEAFDALADVVVGQILMLEAAAADPTTTESKAQENAALAQVKKQRLGRLMEEFGEGFASRAYEVLLDAAGVQAVLEFAFDRKGFITKWLRGKPELARISWVNEVLREGDVGGAAETLLGLGMSREVQVWNKKVELSLGKLALLAEGGGSDDEAGKGEVGGTIKKIDAELEVVKVQDLLYQWILASVHEAVDSSAEVELAVKQFGGLIPRRQKALLQIFEDGIARLLKHEVLDPLTLIDLLTLSSLGPGHYEGMGDQFFLALKVAHYAALENAEEVRRLIWRRCLVRDDWRQVNETNLKGDEEALEAVGETAAYRTLFACFDEESSTPTFRPHHTLKPSDCLGVYTEPEQLDSRFAAMDDSFRGKLVEAMRAEDRLLRGFVEKAQLDEWWRATRETAERMVGVAAQKGHRRVNSGSVGNGGVNGLSLNGRVKMY.

A compositionally biased stretch (basic and acidic residues) spans 1 to 11 (MFSSTLHEDGP). 2 disordered regions span residues 1 to 114 (MFSS…GDGS) and 531 to 554 (VVGS…HRHK). The span at 49 to 62 (TAPTPTPADADAPP) shows a compositional bias: low complexity. 2 stretches are compositionally biased toward basic and acidic residues: residues 65 to 81 (FEVK…RDGI) and 90 to 110 (GPRR…RTSK).

The protein belongs to the nucleoporin Nup133 family. In terms of assembly, component of the nuclear pore complex (NPC). NPC constitutes the exclusive means of nucleocytoplasmic transport. NPCs allow the passive diffusion of ions and small molecules and the active, nuclear transport receptor-mediated bidirectional transport of macromolecules such as proteins, RNAs, ribonucleoparticles (RNPs), and ribosomal subunits across the nuclear envelope. Due to its 8-fold rotational symmetry, all subunits are present with 8 copies or multiples thereof.

The protein localises to the nucleus. It localises to the nuclear pore complex. It is found in the nucleus membrane. Its function is as follows. Functions as a component of the nuclear pore complex (NPC). NPC components, collectively referred to as nucleoporins (NUPs), can play the role of both NPC structural components and of docking or interaction partners for transiently associated nuclear transport factors. NUP133 is involved in nuclear poly(A)+ RNA, tRNA and pre-ribosome export, in GSP1 nuclear import, in NPC assembly and distribution, as well as in nuclear envelope organization. This Chaetomium thermophilum (strain DSM 1495 / CBS 144.50 / IMI 039719) (Thermochaetoides thermophila) protein is Nucleoporin NUP133 (NUP133).